A 768-amino-acid polypeptide reads, in one-letter code: DNA ligase (768 aa).

Residues 30–34 (DAEYD), 79–80 (SL), and E190 contribute to the NAD(+) site. The active-site N6-AMP-lysine intermediate is K192. NAD(+)-binding residues include R213, E250, K367, and K391. Residues C485, C488, C503, and C509 each contribute to the Zn(2+) site. In terms of domain architecture, BRCT spans 678–767 (AAEQPLSGLS…IPPEIQARMQ (90 aa)).

Belongs to the NAD-dependent DNA ligase family. LigA subfamily. The cofactor is Mg(2+). Mn(2+) is required as a cofactor.

It catalyses the reaction NAD(+) + (deoxyribonucleotide)n-3'-hydroxyl + 5'-phospho-(deoxyribonucleotide)m = (deoxyribonucleotide)n+m + AMP + beta-nicotinamide D-nucleotide.. Functionally, DNA ligase that catalyzes the formation of phosphodiester linkages between 5'-phosphoryl and 3'-hydroxyl groups in double-stranded DNA using NAD as a coenzyme and as the energy source for the reaction. It is essential for DNA replication and repair of damaged DNA. This Magnetococcus marinus (strain ATCC BAA-1437 / JCM 17883 / MC-1) protein is DNA ligase.